Reading from the N-terminus, the 203-residue chain is dITP/XTP pyrophosphatase (203 aa).

8–13 (TANKGK) is a binding site for substrate. Residues E41 and D70 each coordinate Mg(2+). Catalysis depends on D70, which acts as the Proton acceptor. Substrate is bound by residues S71, 153–156 (FGYD), K176, and 181–182 (HR).

Belongs to the HAM1 NTPase family. As to quaternary structure, homodimer. The cofactor is Mg(2+).

It catalyses the reaction XTP + H2O = XMP + diphosphate + H(+). The catalysed reaction is dITP + H2O = dIMP + diphosphate + H(+). The enzyme catalyses ITP + H2O = IMP + diphosphate + H(+). Its function is as follows. Pyrophosphatase that catalyzes the hydrolysis of nucleoside triphosphates to their monophosphate derivatives, with a high preference for the non-canonical purine nucleotides XTP (xanthosine triphosphate), dITP (deoxyinosine triphosphate) and ITP. Seems to function as a house-cleaning enzyme that removes non-canonical purine nucleotides from the nucleotide pool, thus preventing their incorporation into DNA/RNA and avoiding chromosomal lesions. This Listeria monocytogenes serotype 4b (strain F2365) protein is dITP/XTP pyrophosphatase.